A 447-amino-acid polypeptide reads, in one-letter code: Na(+)-translocating NADH-quinone reductase subunit A (447 aa).

It belongs to the NqrA family. Composed of six subunits; NqrA, NqrB, NqrC, NqrD, NqrE and NqrF.

The catalysed reaction is a ubiquinone + n Na(+)(in) + NADH + H(+) = a ubiquinol + n Na(+)(out) + NAD(+). In terms of biological role, NQR complex catalyzes the reduction of ubiquinone-1 to ubiquinol by two successive reactions, coupled with the transport of Na(+) ions from the cytoplasm to the periplasm. NqrA to NqrE are probably involved in the second step, the conversion of ubisemiquinone to ubiquinol. This is Na(+)-translocating NADH-quinone reductase subunit A from Photorhabdus laumondii subsp. laumondii (strain DSM 15139 / CIP 105565 / TT01) (Photorhabdus luminescens subsp. laumondii).